The chain runs to 142 residues: Hemoglobin subunit alpha (142 aa).

A Globin domain is found at 2-142; the sequence is VLSAADKTNV…VSTVLTSKYR (141 aa). Phosphoserine is present on Ser-4. Lys-8 is subject to N6-succinyllysine. Position 9 is a phosphothreonine (Thr-9). Position 12 is an N6-succinyllysine (Lys-12). Lys-17 is subject to N6-acetyllysine; alternate. Lys-17 is modified (N6-succinyllysine; alternate). An N6-succinyllysine modification is found at Lys-41. At Ser-50 the chain carries Phosphoserine. Residue His-59 participates in O2 binding. His-88 serves as a coordination point for heme b. Position 103 is a phosphoserine (Ser-103). Thr-109 carries the post-translational modification Phosphothreonine. Phosphoserine is present on Ser-125. Phosphothreonine occurs at positions 135 and 138. Phosphoserine is present on Ser-139.

Belongs to the globin family. Heterotetramer of two alpha chains and two beta chains. In terms of tissue distribution, red blood cells.

Functionally, involved in oxygen transport from the lung to the various peripheral tissues. In terms of biological role, hemopressin acts as an antagonist peptide of the cannabinoid receptor CNR1. Hemopressin-binding efficiently blocks cannabinoid receptor CNR1 and subsequent signaling. The chain is Hemoglobin subunit alpha (HBA) from Equus zebra (Mountain zebra).